The sequence spans 300 residues: Ribosomal protein L11 methyltransferase (300 aa).

S-adenosyl-L-methionine contacts are provided by Thr-141, Gly-164, Asp-186, and Asn-233.

Belongs to the methyltransferase superfamily. PrmA family.

It is found in the cytoplasm. It catalyses the reaction L-lysyl-[protein] + 3 S-adenosyl-L-methionine = N(6),N(6),N(6)-trimethyl-L-lysyl-[protein] + 3 S-adenosyl-L-homocysteine + 3 H(+). In terms of biological role, methylates ribosomal protein L11. This is Ribosomal protein L11 methyltransferase from Synechocystis sp. (strain ATCC 27184 / PCC 6803 / Kazusa).